The following is a 520-amino-acid chain: F-box/LRR-repeat protein At3g59200 (520 aa).

In terms of domain architecture, F-box spans Arg-6 to Ser-54. LRR repeat units lie at residues Cys-170–Asn-197, Phe-219–Asp-244, and Asn-340–Arg-365.

In Arabidopsis thaliana (Mouse-ear cress), this protein is F-box/LRR-repeat protein At3g59200.